A 133-amino-acid polypeptide reads, in one-letter code: Large ribosomal subunit protein bL20 (133 aa).

The protein belongs to the bacterial ribosomal protein bL20 family.

Functionally, binds directly to 23S ribosomal RNA and is necessary for the in vitro assembly process of the 50S ribosomal subunit. It is not involved in the protein synthesizing functions of that subunit. The chain is Large ribosomal subunit protein bL20 from Bartonella tribocorum (strain CIP 105476 / IBS 506).